The sequence spans 331 residues: Light-harvesting complex I LH35 proteins (331 aa).

Its subcellular location is the plastid. The protein resides in the chloroplast. The chain is Light-harvesting complex I LH35 proteins from Euglena gracilis.